Reading from the N-terminus, the 323-residue chain is Putative CDC123-like protein L884 (323 aa).

This sequence belongs to the CDC123 family.

The sequence is that of Putative CDC123-like protein L884 from Acanthamoeba polyphaga mimivirus (APMV).